The primary structure comprises 388 residues: UPF0496 protein 1 (388 aa).

The tract at residues 1–25 is disordered; the sequence is MGNSSSSGSHRPPRPASSESALPPA. The stretch at 198–227 forms a coiled coil; the sequence is QAVYRQQLTMLEKLQQRKHRLDKKVRAIKA. 2 helical membrane passes run 234-254 and 257-277; these read IIFA…AAIA and PVAA…GKWI. A coiled-coil region spans residues 344–376; the sequence is VEEIKKKLEVFMKSVEDLGEQADRCSRDIRRAR.

This sequence belongs to the UPF0496 family.

It is found in the membrane. The sequence is that of UPF0496 protein 1 from Oryza sativa subsp. japonica (Rice).